Consider the following 30-residue polypeptide: Fimbrial assembly protein, serogroup B1 (30 aa).

This chain is Fimbrial assembly protein, serogroup B1 (fimB), found in Dichelobacter nodosus (Bacteroides nodosus).